The sequence spans 193 residues: MENKNEFIIDILKECSALLEGHFLLSSGRHSDKYCQCAKLLQYPDKAEKVLKVVVDKIKDLDFDMVVGPAMGGIIVAYELGRQLKKPNIFTERQEGVMTLRRGFEIQKGKKVIITEDVVTTGKSSLEVAKLIEKLGGEVVAICSIVDRRDDNIELPYNLYSSVKIDVKSYEEKDCPLCKEGLEYIKPGSRNIK.

116 to 124 provides a ligand contact to 5-phospho-alpha-D-ribose 1-diphosphate; that stretch reads EDVVTTGKS. 2 residues coordinate orotate: Thr-120 and Arg-148.

It belongs to the purine/pyrimidine phosphoribosyltransferase family. PyrE subfamily. In terms of assembly, homodimer. Mg(2+) serves as cofactor.

It catalyses the reaction orotidine 5'-phosphate + diphosphate = orotate + 5-phospho-alpha-D-ribose 1-diphosphate. It functions in the pathway pyrimidine metabolism; UMP biosynthesis via de novo pathway; UMP from orotate: step 1/2. Its function is as follows. Catalyzes the transfer of a ribosyl phosphate group from 5-phosphoribose 1-diphosphate to orotate, leading to the formation of orotidine monophosphate (OMP). This is Orotate phosphoribosyltransferase from Clostridium tetani (strain Massachusetts / E88).